A 133-amino-acid chain; its full sequence is Small ribosomal subunit protein uS8 (133 aa).

The protein belongs to the universal ribosomal protein uS8 family. As to quaternary structure, part of the 30S ribosomal subunit. Contacts proteins S5 and S12.

Functionally, one of the primary rRNA binding proteins, it binds directly to 16S rRNA central domain where it helps coordinate assembly of the platform of the 30S subunit. In Mycoplasmoides gallisepticum (strain R(low / passage 15 / clone 2)) (Mycoplasma gallisepticum), this protein is Small ribosomal subunit protein uS8.